A 103-amino-acid polypeptide reads, in one-letter code: uncharacterized protein (103 aa).

Residues 33–57 (GYVAAIVAGPVSMSPLDWICPLLAI) traverse the membrane as a helical segment.

The protein resides in the membrane. This is an uncharacterized protein from Sinorhizobium fredii (strain NBRC 101917 / NGR234).